The chain runs to 455 residues: Glutamate-1-semialdehyde 2,1-aminomutase (455 aa).

Position 286 is an N6-(pyridoxal phosphate)lysine (K286).

The protein belongs to the class-III pyridoxal-phosphate-dependent aminotransferase family. HemL subfamily. As to quaternary structure, homodimer. The cofactor is pyridoxal 5'-phosphate.

Its subcellular location is the cytoplasm. The catalysed reaction is (S)-4-amino-5-oxopentanoate = 5-aminolevulinate. Its pathway is porphyrin-containing compound metabolism; protoporphyrin-IX biosynthesis; 5-aminolevulinate from L-glutamyl-tRNA(Glu): step 2/2. The sequence is that of Glutamate-1-semialdehyde 2,1-aminomutase from Clavibacter sepedonicus (Clavibacter michiganensis subsp. sepedonicus).